Reading from the N-terminus, the 550-residue chain is Arginine--tRNA ligase (550 aa).

A 'HIGH' region motif is present at residues 130–140 (ANPTGPIHIGG).

This sequence belongs to the class-I aminoacyl-tRNA synthetase family. Monomer.

It is found in the cytoplasm. It carries out the reaction tRNA(Arg) + L-arginine + ATP = L-arginyl-tRNA(Arg) + AMP + diphosphate. The sequence is that of Arginine--tRNA ligase from Mycobacterium sp. (strain KMS).